We begin with the raw amino-acid sequence, 149 residues long: Large ribosomal subunit protein bL20m (149 aa).

A mitochondrion-targeting transit peptide spans 1-9 (MVFLTAQLW).

The protein belongs to the bacterial ribosomal protein bL20 family. In terms of assembly, component of the mitochondrial large ribosomal subunit (mt-LSU). Mature mammalian 55S mitochondrial ribosomes consist of a small (28S) and a large (39S) subunit. The 28S small subunit contains a 12S ribosomal RNA (12S mt-rRNA) and 30 different proteins. The 39S large subunit contains a 16S rRNA (16S mt-rRNA), a copy of mitochondrial valine transfer RNA (mt-tRNA(Val)), which plays an integral structural role, and 52 different proteins. Interacts with OXA1L.

It is found in the mitochondrion. The polypeptide is Large ribosomal subunit protein bL20m (MRPL20) (Homo sapiens (Human)).